We begin with the raw amino-acid sequence, 192 residues long: Fe/S biogenesis protein NfuA (192 aa).

[4Fe-4S] cluster-binding residues include Cys149 and Cys152.

It belongs to the NfuA family. In terms of assembly, homodimer. It depends on [4Fe-4S] cluster as a cofactor.

Functionally, involved in iron-sulfur cluster biogenesis. Binds a 4Fe-4S cluster, can transfer this cluster to apoproteins, and thereby intervenes in the maturation of Fe/S proteins. Could also act as a scaffold/chaperone for damaged Fe/S proteins. The protein is Fe/S biogenesis protein NfuA of Pseudoalteromonas atlantica (strain T6c / ATCC BAA-1087).